A 250-amino-acid polypeptide reads, in one-letter code: Acetoacetate decarboxylase 1 (250 aa).

Lys120 serves as the catalytic Schiff-base intermediate with acetoacetate.

This sequence belongs to the ADC family.

It catalyses the reaction acetoacetate + H(+) = acetone + CO2. Catalyzes the conversion of acetoacetate to acetone and carbon dioxide. The protein is Acetoacetate decarboxylase 1 of Bradyrhizobium diazoefficiens (strain JCM 10833 / BCRC 13528 / IAM 13628 / NBRC 14792 / USDA 110).